Here is a 693-residue protein sequence, read N- to C-terminus: Elongation factor G (693 aa).

The 275-residue stretch at 8–282 folds into the tr-type G domain; the sequence is KNTRNIGIMA…AAIEYLPSPL (275 aa). GTP contacts are provided by residues 17–24, 81–85, and 135–138; these read AHIDAGKT, DTPGH, and NKMD.

Belongs to the TRAFAC class translation factor GTPase superfamily. Classic translation factor GTPase family. EF-G/EF-2 subfamily.

The protein resides in the cytoplasm. In terms of biological role, catalyzes the GTP-dependent ribosomal translocation step during translation elongation. During this step, the ribosome changes from the pre-translocational (PRE) to the post-translocational (POST) state as the newly formed A-site-bound peptidyl-tRNA and P-site-bound deacylated tRNA move to the P and E sites, respectively. Catalyzes the coordinated movement of the two tRNA molecules, the mRNA and conformational changes in the ribosome. In Macrococcus caseolyticus (strain JCSC5402) (Macrococcoides caseolyticum), this protein is Elongation factor G.